The sequence spans 147 residues: Cytochrome c-type biogenesis protein CcmE (147 aa).

At 1 to 9 (MKNLKKQRR) the chain is on the cytoplasmic side. Residues 10-30 (IQVIALATVALVLSTALIGYA) traverse the membrane as a helical; Signal-anchor for type II membrane protein segment. At 31–147 (MRDGINFFRA…EQGVYKGTEG (117 aa)) the chain is on the periplasmic side. Heme contacts are provided by H123 and Y127.

Belongs to the CcmE/CycJ family.

It localises to the cell inner membrane. Heme chaperone required for the biogenesis of c-type cytochromes. Transiently binds heme delivered by CcmC and transfers the heme to apo-cytochromes in a process facilitated by CcmF and CcmH. This is Cytochrome c-type biogenesis protein CcmE from Roseobacter denitrificans (strain ATCC 33942 / OCh 114) (Erythrobacter sp. (strain OCh 114)).